The chain runs to 368 residues: F-box only protein 28 (368 aa).

The segment covering 1–11 has biased composition (basic and acidic residues); the sequence is MAAASEERMAE. The interval 1 to 57 is disordered; the sequence is MAAASEERMAEEGGGGHGDGGSPSAIASTQRLPPPPPPQPPQPGSQAPPAPALAPDQ. Gly residues predominate over residues 12–21; it reads EGGGGHGDGG. The segment covering 32-52 has biased composition (pro residues); sequence LPPPPPPQPPQPGSQAPPAPA. The F-box domain maps to 61–109; that stretch reads NNTLVALPIVAIENILSFMSYDEISQLRLVCKRMDLVCQRMLNQGFLKV. Phosphoserine occurs at positions 235 and 242. T270 carries the phosphothreonine modification. The tract at residues 328–368 is disordered; that stretch reads MESAVGNSSGSGQSEESPRKRKKAAEAIDSLRKSKRLRNRK. Residue S344 is modified to Phosphoserine.

Part of a SCF (SKP1-cullin-F-box) protein ligase complex.

The protein resides in the chromosome. Its subcellular location is the centromere. It localises to the kinetochore. In terms of biological role, probably recognizes and binds to some phosphorylated proteins and promotes their ubiquitination and degradation. The protein is F-box only protein 28 (FBXO28) of Bos taurus (Bovine).